A 530-amino-acid polypeptide reads, in one-letter code: NADH-quinone oxidoreductase subunit C/D (530 aa).

An NADH dehydrogenase I subunit C region spans residues 1 to 144; sequence MEEIKYIEPA…NPLRMDNEET (144 aa). The NADH dehydrogenase I subunit D stretch occupies residues 171 to 530; it reads EYVVNIGPQH…LDYVVPDIDR (360 aa).

In the N-terminal section; belongs to the complex I 30 kDa subunit family. This sequence in the C-terminal section; belongs to the complex I 49 kDa subunit family. As to quaternary structure, NDH-1 is composed of 13 different subunits. Subunits NuoB, CD, E, F, and G constitute the peripheral sector of the complex.

The protein localises to the cell inner membrane. The enzyme catalyses a quinone + NADH + 5 H(+)(in) = a quinol + NAD(+) + 4 H(+)(out). Functionally, NDH-1 shuttles electrons from NADH, via FMN and iron-sulfur (Fe-S) centers, to quinones in the respiratory chain. The immediate electron acceptor for the enzyme in this species is believed to be a menaquinone. Couples the redox reaction to proton translocation (for every two electrons transferred, four hydrogen ions are translocated across the cytoplasmic membrane), and thus conserves the redox energy in a proton gradient. The protein is NADH-quinone oxidoreductase subunit C/D of Bacteroides fragilis (strain ATCC 25285 / DSM 2151 / CCUG 4856 / JCM 11019 / LMG 10263 / NCTC 9343 / Onslow / VPI 2553 / EN-2).